We begin with the raw amino-acid sequence, 640 residues long: Serine/threonine-protein phosphatase with EF-hands 1 (640 aa).

An IQ domain is found at 16-45 (VVRAALIIQNWYRRYRARLSARQHYALAIF). The tract at residues 122–445 (INLLLQAFKQ…PQFFQYQVTS (324 aa)) is catalytic. Positions 173, 175, 202, and 234 each coordinate Mn(2+). H235 (proton donor) is an active-site residue. Positions 286 and 393 each coordinate Mn(2+). 3 consecutive EF-hand domains span residues 473 to 508 (ARKTDLINAFELRDHSRTGKISLAQWAFSMESILGL), 556 to 591 (RYRSDLKIIFNIIDTDQSGLISMDEFRTMWKLFNAH), and 596 to 631 (IDDSQIDELASTMDSNKDGNIDFNEFLRAFYVVHKY). D569, D571, S573, E580, D609, N611, D613, N615, and E620 together coordinate Ca(2+).

The protein belongs to the PPP phosphatase family. Requires Mn(2+) as cofactor. It depends on Mg(2+) as a cofactor.

It carries out the reaction O-phospho-L-seryl-[protein] + H2O = L-seryl-[protein] + phosphate. The enzyme catalyses O-phospho-L-threonyl-[protein] + H2O = L-threonyl-[protein] + phosphate. Its activity is regulated as follows. Activated by calcium. Its function is as follows. May have a role in the recovery or adaptation response of photoreceptors. May have a role in development. This Rattus norvegicus (Rat) protein is Serine/threonine-protein phosphatase with EF-hands 1 (Ppef1).